The sequence spans 223 residues: Protein-L-isoaspartate O-methyltransferase (223 aa).

The active site involves S70.

The protein belongs to the methyltransferase superfamily. L-isoaspartyl/D-aspartyl protein methyltransferase family.

It is found in the cytoplasm. The enzyme catalyses [protein]-L-isoaspartate + S-adenosyl-L-methionine = [protein]-L-isoaspartate alpha-methyl ester + S-adenosyl-L-homocysteine. Catalyzes the methyl esterification of L-isoaspartyl residues in peptides and proteins that result from spontaneous decomposition of normal L-aspartyl and L-asparaginyl residues. It plays a role in the repair and/or degradation of damaged proteins. This chain is Protein-L-isoaspartate O-methyltransferase, found in Methylobacillus flagellatus (strain ATCC 51484 / DSM 6875 / VKM B-1610 / KT).